The sequence spans 157 residues: Small ribosomal subunit protein uS7 (157 aa).

The protein belongs to the universal ribosomal protein uS7 family. As to quaternary structure, part of the 30S ribosomal subunit. Contacts proteins S9 and S11.

Functionally, one of the primary rRNA binding proteins, it binds directly to 16S rRNA where it nucleates assembly of the head domain of the 30S subunit. Is located at the subunit interface close to the decoding center, probably blocks exit of the E-site tRNA. This is Small ribosomal subunit protein uS7 from Chloroflexus aurantiacus (strain ATCC 29366 / DSM 635 / J-10-fl).